The primary structure comprises 269 residues: 3-methyl-2-oxobutanoate hydroxymethyltransferase (269 aa).

2 residues coordinate Mg(2+): Asp46 and Asp85. 3-methyl-2-oxobutanoate contacts are provided by residues 46 to 47 (DS), Asp85, and Lys114. Glu116 lines the Mg(2+) pocket. Residue Glu183 is the Proton acceptor of the active site.

The protein belongs to the PanB family. Homodecamer; pentamer of dimers. Mg(2+) is required as a cofactor.

It is found in the cytoplasm. It catalyses the reaction 3-methyl-2-oxobutanoate + (6R)-5,10-methylene-5,6,7,8-tetrahydrofolate + H2O = 2-dehydropantoate + (6S)-5,6,7,8-tetrahydrofolate. It functions in the pathway cofactor biosynthesis; (R)-pantothenate biosynthesis; (R)-pantoate from 3-methyl-2-oxobutanoate: step 1/2. Catalyzes the reversible reaction in which hydroxymethyl group from 5,10-methylenetetrahydrofolate is transferred onto alpha-ketoisovalerate to form ketopantoate. The sequence is that of 3-methyl-2-oxobutanoate hydroxymethyltransferase from Methylococcus capsulatus (strain ATCC 33009 / NCIMB 11132 / Bath).